Here is a 376-residue protein sequence, read N- to C-terminus: Putative F-box protein At3g18330 (376 aa).

The F-box domain maps to 1–46 (MPMPNLPKELVEEILSFVPATYLKRLSATCKPWNRLIHNDKRFARK).

This is Putative F-box protein At3g18330 from Arabidopsis thaliana (Mouse-ear cress).